The sequence spans 143 residues: uncharacterized protein (143 aa).

It is found in the mitochondrion. This is an uncharacterized protein from Arabidopsis thaliana (Mouse-ear cress).